We begin with the raw amino-acid sequence, 369 residues long: Chorismate synthase (369 aa).

Residues R48 and R54 each coordinate NADP(+). Residues 125–127 (RSS), 238–239 (NA), G278, 293–297 (KPTSS), and R319 each bind FMN.

This sequence belongs to the chorismate synthase family. Homotetramer. It depends on FMNH2 as a cofactor.

It catalyses the reaction 5-O-(1-carboxyvinyl)-3-phosphoshikimate = chorismate + phosphate. It participates in metabolic intermediate biosynthesis; chorismate biosynthesis; chorismate from D-erythrose 4-phosphate and phosphoenolpyruvate: step 7/7. Its function is as follows. Catalyzes the anti-1,4-elimination of the C-3 phosphate and the C-6 proR hydrogen from 5-enolpyruvylshikimate-3-phosphate (EPSP) to yield chorismate, which is the branch point compound that serves as the starting substrate for the three terminal pathways of aromatic amino acid biosynthesis. This reaction introduces a second double bond into the aromatic ring system. The sequence is that of Chorismate synthase from Nitrosococcus oceani (strain ATCC 19707 / BCRC 17464 / JCM 30415 / NCIMB 11848 / C-107).